The sequence spans 56 residues: Large ribosomal subunit protein bL33A (56 aa).

This sequence belongs to the bacterial ribosomal protein bL33 family.

The sequence is that of Large ribosomal subunit protein bL33A from Nocardia farcinica (strain IFM 10152).